Reading from the N-terminus, the 160-residue chain is Protein MGF 110-13L (160 aa).

Transmembrane regions (helical) follow at residues 13 to 33 (HCCF…FAYY) and 35 to 55 (NLHL…IWLS).

It belongs to the asfivirus MGF 110 family.

It localises to the host membrane. In terms of biological role, plays a role in virus cell tropism, and may be required for efficient virus replication in macrophages. This is Protein MGF 110-13L from Ornithodoros (relapsing fever ticks).